The following is a 139-amino-acid chain: Small ribosomal subunit protein uS12 (139 aa).

The segment at 1–21 (MPTINQLVRKGRKAVQEKSTA) is disordered. 3-methylthioaspartic acid is present on Asp-102.

This sequence belongs to the universal ribosomal protein uS12 family. As to quaternary structure, part of the 30S ribosomal subunit. Contacts proteins S8 and S17. May interact with IF1 in the 30S initiation complex.

Its function is as follows. With S4 and S5 plays an important role in translational accuracy. Interacts with and stabilizes bases of the 16S rRNA that are involved in tRNA selection in the A site and with the mRNA backbone. Located at the interface of the 30S and 50S subunits, it traverses the body of the 30S subunit contacting proteins on the other side and probably holding the rRNA structure together. The combined cluster of proteins S8, S12 and S17 appears to hold together the shoulder and platform of the 30S subunit. The sequence is that of Small ribosomal subunit protein uS12 from Alkaliphilus metalliredigens (strain QYMF).